Here is a 364-residue protein sequence, read N- to C-terminus: Coproporphyrin III ferrochelatase (364 aa).

Fe-coproporphyrin III is bound by residues Arg29 and Tyr118. His169 and Glu250 together coordinate Fe(2+).

This sequence belongs to the ferrochelatase family.

The protein resides in the cytoplasm. The enzyme catalyses Fe-coproporphyrin III + 2 H(+) = coproporphyrin III + Fe(2+). Its pathway is porphyrin-containing compound metabolism; protoheme biosynthesis. In terms of biological role, involved in coproporphyrin-dependent heme b biosynthesis. Catalyzes the insertion of ferrous iron into coproporphyrin III to form Fe-coproporphyrin III. The sequence is that of Coproporphyrin III ferrochelatase from Streptococcus pneumoniae serotype 2 (strain D39 / NCTC 7466).